The chain runs to 481 residues: Ribulose bisphosphate carboxylase large chain (481 aa).

Positions methionine 1–serine 2 are excised as a propeptide. Residue proline 3 is modified to N-acetylproline. Lysine 14 carries the post-translational modification N6,N6,N6-trimethyllysine. The substrate site is built by asparagine 123 and threonine 173. The Proton acceptor role is filled by lysine 175. Lysine 177 serves as a coordination point for substrate. Mg(2+) contacts are provided by lysine 201, aspartate 203, and glutamate 204. Lysine 201 bears the N6-carboxylysine mark. The active-site Proton acceptor is histidine 294. Substrate is bound by residues arginine 295, histidine 327, and serine 379.

The protein belongs to the RuBisCO large chain family. Type I subfamily. In terms of assembly, heterohexadecamer of 8 large chains and 8 small chains; disulfide-linked. The disulfide link is formed within the large subunit homodimers. Mg(2+) is required as a cofactor. In terms of processing, the disulfide bond which can form in the large chain dimeric partners within the hexadecamer appears to be associated with oxidative stress and protein turnover.

Its subcellular location is the plastid. The protein localises to the chloroplast. It carries out the reaction 2 (2R)-3-phosphoglycerate + 2 H(+) = D-ribulose 1,5-bisphosphate + CO2 + H2O. It catalyses the reaction D-ribulose 1,5-bisphosphate + O2 = 2-phosphoglycolate + (2R)-3-phosphoglycerate + 2 H(+). RuBisCO catalyzes two reactions: the carboxylation of D-ribulose 1,5-bisphosphate, the primary event in carbon dioxide fixation, as well as the oxidative fragmentation of the pentose substrate in the photorespiration process. Both reactions occur simultaneously and in competition at the same active site. In Coffea arabica (Arabian coffee), this protein is Ribulose bisphosphate carboxylase large chain.